The sequence spans 337 residues: Holliday junction branch migration complex subunit RuvB (337 aa).

A large ATPase domain (RuvB-L) region spans residues A4–Y186. ATP contacts are provided by residues I25, R26, G67, K70, T71, T72, E133–Y135, R176, Y186, and R223. T71 serves as a coordination point for Mg(2+). The segment at K187–D257 is small ATPAse domain (RuvB-S). Residues V260–K337 are head domain (RuvB-H). Residues R315 and R320 each coordinate DNA.

It belongs to the RuvB family. As to quaternary structure, homohexamer. Forms an RuvA(8)-RuvB(12)-Holliday junction (HJ) complex. HJ DNA is sandwiched between 2 RuvA tetramers; dsDNA enters through RuvA and exits via RuvB. An RuvB hexamer assembles on each DNA strand where it exits the tetramer. Each RuvB hexamer is contacted by two RuvA subunits (via domain III) on 2 adjacent RuvB subunits; this complex drives branch migration. In the full resolvosome a probable DNA-RuvA(4)-RuvB(12)-RuvC(2) complex forms which resolves the HJ.

The protein localises to the cytoplasm. It catalyses the reaction ATP + H2O = ADP + phosphate + H(+). Functionally, the RuvA-RuvB-RuvC complex processes Holliday junction (HJ) DNA during genetic recombination and DNA repair, while the RuvA-RuvB complex plays an important role in the rescue of blocked DNA replication forks via replication fork reversal (RFR). RuvA specifically binds to HJ cruciform DNA, conferring on it an open structure. The RuvB hexamer acts as an ATP-dependent pump, pulling dsDNA into and through the RuvAB complex. RuvB forms 2 homohexamers on either side of HJ DNA bound by 1 or 2 RuvA tetramers; 4 subunits per hexamer contact DNA at a time. Coordinated motions by a converter formed by DNA-disengaged RuvB subunits stimulates ATP hydrolysis and nucleotide exchange. Immobilization of the converter enables RuvB to convert the ATP-contained energy into a lever motion, pulling 2 nucleotides of DNA out of the RuvA tetramer per ATP hydrolyzed, thus driving DNA branch migration. The RuvB motors rotate together with the DNA substrate, which together with the progressing nucleotide cycle form the mechanistic basis for DNA recombination by continuous HJ branch migration. Branch migration allows RuvC to scan DNA until it finds its consensus sequence, where it cleaves and resolves cruciform DNA. In Aliivibrio salmonicida (strain LFI1238) (Vibrio salmonicida (strain LFI1238)), this protein is Holliday junction branch migration complex subunit RuvB.